A 227-amino-acid chain; its full sequence is MPPPMIPPKLPPLEFIAAEALYSSIIFLICFLIYHRLREVYKLSDYRGFHFFSNTFLFLGLAYFLRFVVLLLSASGVMFEEISLEGLRGIMAFSMAFLAYSGSAAILYTIYSLLWRWLERFPGEVVINGVALVIALTSLLSRMPLVFLISQLALVFLLVAAIFVNYSHFRHESRSKRAYPLYILLFVFWLLNISLTFRFLPLEFRFAIYTLSVAVILIIAYRVLRKL.

A run of 7 helical transmembrane segments spans residues 15-34 (FIAAEALYSSIIFLICFLIY), 55-77 (TFLFLGLAYFLRFVVLLLSASGV), 92-114 (AFSMAFLAYSGSAAILYTIYSLL), 121-140 (FPGEVVINGVALVIALTSLL), 145-167 (LVFLISQLALVFLLVAAIFVNYS), 180-202 (PLYILLFVFWLLNISLTFRFLPL), and 206-224 (FAIYTLSVAVILIIAYRVL).

The protein localises to the cell membrane. This is an uncharacterized protein from Archaeoglobus fulgidus (strain ATCC 49558 / DSM 4304 / JCM 9628 / NBRC 100126 / VC-16).